Reading from the N-terminus, the 156-residue chain is Myosin, essential light chain, adductor muscle (156 aa).

2 EF-hand domains span residues 6–43 and 81–116; these read DEID…LGIN and GTFA…LGER.

In terms of biological role, in molluscan muscle, calcium regulation is associated with myosin rather than with actin. Muscle myosin contains two types of light chains: the catalytic light chain, essential for ATPase activity, and the regulatory light chain, a calcium-binding protein responsible for Ca(2+) dependent binding and Ca(2+) dependent Mg-ATPase activity. This chain is Myosin, essential light chain, adductor muscle, found in Mizuhopecten yessoensis (Japanese scallop).